Reading from the N-terminus, the 112-residue chain is UPF0329 protein ECU11_0080 (112 aa).

Belongs to the UPF0329 family.

The protein is UPF0329 protein ECU11_0080 of Encephalitozoon cuniculi (strain GB-M1) (Microsporidian parasite).